The primary structure comprises 833 residues: Leucine--tRNA ligase (833 aa).

Residues 41-52 (PYPSGAGLHVGH) carry the 'HIGH' region motif. The 'KMSKS' region signature appears at 610-614 (KMSKS). Lys-613 serves as a coordination point for ATP.

The protein belongs to the class-I aminoacyl-tRNA synthetase family.

The protein resides in the cytoplasm. It carries out the reaction tRNA(Leu) + L-leucine + ATP = L-leucyl-tRNA(Leu) + AMP + diphosphate. This chain is Leucine--tRNA ligase, found in Streptococcus mutans serotype c (strain ATCC 700610 / UA159).